Reading from the N-terminus, the 289-residue chain is Bidirectional sugar transporter SWEET15 (289 aa).

At 1–10 (MAMAMANHHT) the chain is on the extracellular side. The helical transmembrane segment at 11 to 31 (LGLIFGILGNIISFLVYFAPA) threads the bilayer. The MtN3/slv 1 domain occupies 14 to 100 (IFGILGNIIS…LYFFYAPMQA (87 aa)). Residues 32-45 (PTFYRIYKRKSAEG) lie on the Cytoplasmic side of the membrane. Residues 46–66 (FHSLPYIVALFSAMLWLYYAL) traverse the membrane as a helical segment. The Extracellular portion of the chain corresponds to 67–70 (LKKD). The helical transmembrane segment at 71-91 (AFLLITINSFGCAIESFYILL) threads the bilayer. Residues 92–106 (YFFYAPMQAKKQTLK) lie on the Cytoplasmic side of the membrane. A helical transmembrane segment spans residues 107–127 (VVISLNVGVFSILVVLIQFLL). At 128–134 (KGSNRIN) the chain is on the extracellular side. A helical transmembrane segment spans residues 135–155 (VFGWICASFSVAVFAAPLSIV). The 84-residue stretch at 136-219 (FGWICASFSV…VLYGFYRNAG (84 aa)) folds into the MtN3/slv 2 domain. Topologically, residues 156–167 (AKVIRTKSVEFM) are cytoplasmic. A helical membrane pass occupies residues 168–188 (PFSLSFFLTLSAIMWFAYGLL). Residues 189–193 (KNDPC) lie on the Extracellular side of the membrane. Residues 194-214 (VAIPNILGVILGLVQMVLYGF) form a helical membrane-spanning segment. The Cytoplasmic segment spans residues 215 to 289 (YRNAGKEKME…GELQPNGSTV (75 aa)). Residues 249–289 (GAQQNGIKKSGSEDVKDDEETGNREKSTENSGELQPNGSTV) are disordered. A compositionally biased stretch (polar residues) spans 277–289 (ENSGELQPNGSTV).

Belongs to the SWEET sugar transporter family. Forms homooligomers and/or heterooligomers.

Its subcellular location is the cell membrane. Functionally, mediates both low-affinity uptake and efflux of sugar across the plasma membrane. The polypeptide is Bidirectional sugar transporter SWEET15 (Vitis vinifera (Grape)).